The sequence spans 824 residues: MQERYIPKNVEGKWQEIWEENKTFTVTEDPSKPKYYLLEMFPYPSGRIHMGHVRNYSIGDVVGRFKRMRGFNVLHPMGWDAFGMPAENAAIKHGSHPAKWTYENIDYMRSQLKKMGLSYDWGRELATCDVDYYKWEQKMFLEMYEKGLVYKKSSFVNWCPACETVLANEQVEDGCCWRCDSDVTQKELDQWFFRITRYAEELLEDTWNLPGWPERVLVMQRNWIGKSFGCEIDFPVEGKVEKVKVFTTRQDTLYGATFMSLAPEHPQALELTTPERRAEVEAFIDKVKKTDKIKRTAEDFEKEGVFTGAYCINPVTNLRMPVYLANFVLLDYGTGAVMAVPTHDQRDFEFARTYDLPLQVVIQPEGETLDPAAMTAAYTEVGTMVNSGPFNGMKSDEAKEKIADYLEQEGVGTKTVNYRLRDWGISRQRYWGNPIPVINCDICGVVPVPDKDLPVVLPMDAEFTGEGGNPLARVESFVNVTCPQCGAEARRETDTMDTFVQSSWYFLRYCCPDFACGPIDRARAGYWMPVDQYIGGIEHAVLHLLYSRFFTKALRDLGYVTVAEPFKNLLTQGMVIKDGAKMSKSKGNVVDPDALIERYGADTARLFTLFAAPPEKDLDWSDQGVEGSFRFLNRVWRLVFEVLPFIGSAGKPDPAALGDGARDLRRTVHKTIRKVTDDLDERFHFNTAISAVMELVNAIQSFEPKNAPENAPVLREAVESVVQLLAPFVPHVAEELWESLGHQGGVEASGWPSYDPEATVEEELLIVVQVNGKLRGKVTVAVDAGEEQVKAAAFADDKVKPWLDGKQIRKAIYVPGKLLNIVVG.

Positions 42–52 (PYPSGRIHMGH) match the 'HIGH' region motif. Positions 581–585 (KMSKS) match the 'KMSKS' region motif. Residue K584 coordinates ATP.

The protein belongs to the class-I aminoacyl-tRNA synthetase family.

Its subcellular location is the cytoplasm. The catalysed reaction is tRNA(Leu) + L-leucine + ATP = L-leucyl-tRNA(Leu) + AMP + diphosphate. This chain is Leucine--tRNA ligase, found in Geobacter sulfurreducens (strain ATCC 51573 / DSM 12127 / PCA).